Here is a 695-residue protein sequence, read N- to C-terminus: Polyribonucleotide nucleotidyltransferase (695 aa).

Mg(2+)-binding residues include Asp488 and Asp494. The KH domain maps to 554-613 (PKTAVIKIQTDKIRDLIGKGGETIKGIISTSSASVDVDDNGNVNIFSNDQKSFDTAMQMV). The S1 motif domain maps to 623–690 (GKVYTGKVVK…DRGRIKLSRK (68 aa)).

This sequence belongs to the polyribonucleotide nucleotidyltransferase family. Component of the RNA degradosome, which is a multiprotein complex involved in RNA processing and mRNA degradation. The cofactor is Mg(2+).

It is found in the cytoplasm. The enzyme catalyses RNA(n+1) + phosphate = RNA(n) + a ribonucleoside 5'-diphosphate. Involved in mRNA degradation. Catalyzes the phosphorolysis of single-stranded polyribonucleotides processively in the 3'- to 5'-direction. This Ruthia magnifica subsp. Calyptogena magnifica protein is Polyribonucleotide nucleotidyltransferase.